A 207-amino-acid polypeptide reads, in one-letter code: Inhibitor of hydrogen peroxide resistance (207 aa).

A DNA-binding region (H-T-H motif) is located at residues 163 to 182 (MNYIHQRTRISRSVVAEVLA).

Belongs to the IprA family.

In terms of biological role, involved in oxidative stress resistance. This chain is Inhibitor of hydrogen peroxide resistance, found in Escherichia coli O157:H7.